Reading from the N-terminus, the 246-residue chain is MSNRDTLFSTPVANLGDWTFDERVAEVFPDMIQRSVPGYANIISMIGMLAERFVQEDSQVYDLGCSLGAATLSVRRNIKASGCRIIAVDNSPAMVERCRRHIDAFRADTPVEVIEADIRRVPIENASLVVLNFTLQFLRPEERQQLLNTIWQGLKPGGALVLSEKFSFNDADVGELLFNMHHDFKRANGYSELEISQKRSMLENVMLTDSVETHKQRLKLAGFQHAELWFQCFNFGSLVALKAGHA.

S-adenosyl-L-methionine contacts are provided by residues Tyr39, 64 to 66, 89 to 90, 117 to 118, Asn132, and Arg199; these read GCS, DN, and DI.

This sequence belongs to the class I-like SAM-binding methyltransferase superfamily. Cx-SAM synthase family. Homodimer.

It carries out the reaction prephenate + S-adenosyl-L-methionine = carboxy-S-adenosyl-L-methionine + 3-phenylpyruvate + H2O. In terms of biological role, catalyzes the conversion of S-adenosyl-L-methionine (SAM) to carboxy-S-adenosyl-L-methionine (Cx-SAM). The protein is Carboxy-S-adenosyl-L-methionine synthase of Erwinia tasmaniensis (strain DSM 17950 / CFBP 7177 / CIP 109463 / NCPPB 4357 / Et1/99).